The sequence spans 491 residues: FAD-dependent monooxygenase idtM (491 aa).

Residues Glu-34, Gly-48, Arg-107, Asp-307, and Ala-320 each coordinate FAD. A helical membrane pass occupies residues 448–468 (ILSLVYVVAGLAMMYMSIYLV).

This sequence belongs to the paxM FAD-dependent monooxygenase family. It depends on FAD as a cofactor.

Its subcellular location is the membrane. It functions in the pathway secondary metabolite biosynthesis. Functionally, FAD-dependent monooxygenase; part of the gene cluster that mediates the biosynthesis of paspalitrems, indole-diterpene (IDT) mycotoxins that are potent tremorgens in mammals. The geranylgeranyl diphosphate (GGPP) synthase idtG is proposed to catalyze the first step in IDT biosynthesis via catalysis of a series of iterative condensations of isopentenyl diphosphate (IPP) with dimethylallyl diphosphate (DMAPP), geranyl diphosphate (GPP), and farnesyl diphosphate (FPP), to form GGPP. Condensation of indole-3-glycerol phosphate with GGPP by the prenyltransferase idtC then forms 3-geranylgeranylindole (3-GGI). Epoxidation of the two terminal alkenes of the geranylgeranyl moiety by the FAD-dependent monooxygenase idtM, and cyclization by the terpene cyclase idtB then leads to the production of paspaline. The cytochrome P450 monooxygenase idtP then catalyzes oxidative elimination of the pendant methyl group at C-12 of paspaline and generates the C-10 ketone to yield 13-desoxypaxilline. The cytochrome P450 monooxygenase idtQ may catalyze the C-13 oxidation of 13-desoxypaxilline to afford paxilline. Considering that both paspalicine and paxilline were detected in C.paspali, idtQ also catalyzes the formation of paspalinine from 13-desoxypaxilline via paspalicine as an intermediate. Finally, the alpha-prenyltransferase idtF prenylates paspalinine at the C-20 or the C-21 positions to yield paspalitrems A and C, respectively. The hydroxylation of paspalitrem A at C-32 by a still unknown oxidase affords paspalitrem B. The chain is FAD-dependent monooxygenase idtM from Claviceps paspali (Rye ergot fungus).